Here is a 164-residue protein sequence, read N- to C-terminus: Interferon gamma (164 aa).

The N-terminal stretch at 1–19 is a signal peptide; the sequence is MTCQTYNLFVLSVIMIYYG. Asparagine 42 and asparagine 61 each carry an N-linked (GlcNAc...) asparagine glycan.

The protein belongs to the type II (or gamma) interferon family. Homodimer.

It localises to the secreted. In terms of biological role, produced by lymphocytes activated by specific antigens or mitogens. IFN-gamma, in addition to having antiviral activity, has important immunoregulatory functions. It is a potent activator of macrophages, it has antiproliferative effects on transformed cells and it can potentiate the antiviral and antitumor effects of the type I interferons. The polypeptide is Interferon gamma (IFNG) (Gallus gallus (Chicken)).